The chain runs to 505 residues: Phosphoethanolamine N-methyltransferase (505 aa).

S-adenosyl-L-homocysteine-binding residues include Gly-76, Arg-81, Asp-97, Asp-122, Val-123, and Asn-141. Phosphocholine is bound by residues Ser-174, Ser-179, Gly-180, Arg-184, and Tyr-191. N-methylethanolamine phosphate-binding positions include 260-261 (QY) and Tyr-269. Tyr-269 lines the phosphocholine pocket. S-adenosyl-L-homocysteine is bound by residues Val-278, Ser-279, Gly-305, Asp-327, Asp-353, Cys-354, and Arg-370. Phosphocholine is bound by residues Tyr-401, Tyr-415, Arg-419, Tyr-421, and Lys-487. N-methylethanolamine phosphate-binding positions include Tyr-401, Tyr-415, 419 to 421 (RGY), and Lys-487.

It belongs to the class I-like SAM-binding methyltransferase superfamily. PEAMT family.

It carries out the reaction phosphoethanolamine + S-adenosyl-L-methionine = N-methylethanolamine phosphate + S-adenosyl-L-homocysteine + H(+). It catalyses the reaction N-methylethanolamine phosphate + S-adenosyl-L-methionine = N,N-dimethylethanolamine phosphate + S-adenosyl-L-homocysteine + H(+). The enzyme catalyses N,N-dimethylethanolamine phosphate + S-adenosyl-L-methionine = phosphocholine + S-adenosyl-L-homocysteine + H(+). It functions in the pathway phospholipid metabolism; phosphatidylcholine biosynthesis; phosphocholine from phosphoethanolamine: step 1/1. Inhibited by phosphatidic acid. Functionally, involved in phosphocholine biosynthesis. Catalyzes the N-methylation of phosphoethanolamine, phosphomonomethylethanolamine and phosphodimethylethanolamine, the three methylation steps required to convert phosphoethanolamine to phosphocholine (PC). This Triticum aestivum (Wheat) protein is Phosphoethanolamine N-methyltransferase.